Here is a 472-residue protein sequence, read N- to C-terminus: MEFPDHSRQLLQCLSQQRHQGFLCDCTVLVGEAQFRAHRAVLASCSMYFHLFYRDQLDKRDIVHLNSDIVTAPAFSLLLQFMYEGKLEFSNLPVEDVLAAASYLHMYDIVKVCKGKLKDKELNSGEKIIDDGEKDDKPVDSEEHHEHSFDASQQKISTLDSVKPIWKEKVSGLSGLSSDLIGVNSVPAEAVMCKRAAGKTKANDSSPSSPLSQRSANHTHPPSDRDGALDLSFKPMPGRDSFHPSYVFGQLVSDSQQQGSLPLVKHEQDLLSEQEDSQAKSPKSQQVGNPAKSLVTGLGHMFTGNGNSHTREDDLYQDRDESEDEMDSSDLSTSGVLVSPGQICICPLCSKVFPSPHILQLHLSSHFKDKDNSRIKMSPDGSVPTCTICGKTFSCMYTLKRHERTHSGEKPFTCGQCGKSFQYSHNLSRHAVVHTREKPHACKWCERRFTQSGDLYRHIRKFHCGLVKSLVV.

The BTB domain maps to 24-91; sequence CDCTVLVGEA…MYEGKLEFSN (68 aa). The span at 127–149 shows a compositional bias: basic and acidic residues; the sequence is KIIDDGEKDDKPVDSEEHHEHSF. Disordered regions lie at residues 127 to 155, 197 to 236, and 269 to 334; these read KIID…SQQK, AGKT…FKPM, and DLLS…LSTS. Low complexity predominate over residues 205–215; sequence SSPSSPLSQRS. A compositionally biased stretch (polar residues) spans 279–288; the sequence is AKSPKSQQVG. A compositionally biased stretch (basic and acidic residues) spans 309 to 319; that stretch reads HTREDDLYQDR. 4 C2H2-type zinc fingers span residues 344-366, 384-406, 412-434, and 440-463; these read CICP…LSSH, PTCT…ERTH, FTCG…AVVH, and HACK…RKFH.

Belongs to the krueppel C2H2-type zinc-finger protein family. ZBTB18 subfamily.

The protein localises to the nucleus. Its function is as follows. Transcriptional repressor that plays a role in various developmental processes. Specifically binds the consensus DNA sequence 5'-[AC]ACATCTG[GT][AC]-3' which contains the E box core, and acts by recruiting chromatin remodeling multiprotein complexes. This is Zinc finger and BTB domain-containing protein 18.2 (zbtb18.2) from Xenopus laevis (African clawed frog).